A 153-amino-acid chain; its full sequence is Ribosome maturation factor RimP (153 aa).

It belongs to the RimP family.

It is found in the cytoplasm. Required for maturation of 30S ribosomal subunits. In Desulforamulus reducens (strain ATCC BAA-1160 / DSM 100696 / MI-1) (Desulfotomaculum reducens), this protein is Ribosome maturation factor RimP.